The chain runs to 231 residues: ATP phosphoribosyltransferase (231 aa).

This sequence belongs to the ATP phosphoribosyltransferase family. Short subfamily. As to quaternary structure, heteromultimer composed of HisG and HisZ subunits.

The protein localises to the cytoplasm. The catalysed reaction is 1-(5-phospho-beta-D-ribosyl)-ATP + diphosphate = 5-phospho-alpha-D-ribose 1-diphosphate + ATP. It participates in amino-acid biosynthesis; L-histidine biosynthesis; L-histidine from 5-phospho-alpha-D-ribose 1-diphosphate: step 1/9. Catalyzes the condensation of ATP and 5-phosphoribose 1-diphosphate to form N'-(5'-phosphoribosyl)-ATP (PR-ATP). Has a crucial role in the pathway because the rate of histidine biosynthesis seems to be controlled primarily by regulation of HisG enzymatic activity. This is ATP phosphoribosyltransferase from Psychrobacter arcticus (strain DSM 17307 / VKM B-2377 / 273-4).